We begin with the raw amino-acid sequence, 140 residues long: Nucleoside diphosphate kinase (140 aa).

The ATP site is built by K11, F59, R87, T93, R104, and N114. Residue H117 is the Pros-phosphohistidine intermediate of the active site.

Belongs to the NDK family. Homotetramer. It depends on Mg(2+) as a cofactor.

It is found in the cytoplasm. It carries out the reaction a 2'-deoxyribonucleoside 5'-diphosphate + ATP = a 2'-deoxyribonucleoside 5'-triphosphate + ADP. The enzyme catalyses a ribonucleoside 5'-diphosphate + ATP = a ribonucleoside 5'-triphosphate + ADP. Major role in the synthesis of nucleoside triphosphates other than ATP. The ATP gamma phosphate is transferred to the NDP beta phosphate via a ping-pong mechanism, using a phosphorylated active-site intermediate. In Bradyrhizobium sp. (strain BTAi1 / ATCC BAA-1182), this protein is Nucleoside diphosphate kinase.